The primary structure comprises 201 residues: Akirin (201 aa).

The interval 1–133 is disordered; it reads MACATLKRAL…PRRPDSPQNL (133 aa). The Nuclear localization signal motif lies at 20–25; the sequence is PKRRRC. Residues serine 39 and serine 41 each carry the phosphoserine modification. Polar residues-rich tracts occupy residues 44–57 and 65–75; these read GPST…TPSN and EPSPFSESSLA. At serine 67 the chain carries Phosphoserine. The segment covering 112 to 122 has biased composition (low complexity); it reads SESSGSEMGPE. A phosphoserine mark is found at serine 123 and serine 129.

Belongs to the akirin family. In terms of assembly, interacts with dmap1. Interacts with bap60 and rel; interaction is immune stimulation-dependent; activates selected rel target gene promoters. Interacts with bap55; interaction is immune stimulation-dependent. Interacts with twi. Post-translationally, polyubiquitinated via 'Lys-63'-linked ubiquitin by Hyd, promoting interaction with rel. As to expression, ubiquitous.

It localises to the nucleus. Its function is as follows. Molecular adapter that acts as a bridge between a variety of multiprotein complexes, and which is required for embryonic development and for normal innate immune response. Acts as a regulator of embryonic myogenesis by bridging Twist (twi) with the SWI/SNF-like Brahma complex, promoting expression of twi-regulated genes during myogenesis. Effector of immune deficiency pathway (Imd) by acting either downstream of, or at the level of, the NF-kappa-B factor Relish (Rel). Acts by bridging the NF-kappa-B factor Rel and the Brahma complex through bap60 interaction, leading to activation a subset of NF-kappa-B factor Relish (Rel) effector genes. Not part of the Toll pathway. Required for the formation of the heart by promoting expression ot tinman (tin). The polypeptide is Akirin (Drosophila melanogaster (Fruit fly)).